Reading from the N-terminus, the 270-residue chain is Non-structural maintenance of chromosomes element 1 homolog (270 aa).

The RING-type; atypical zinc-finger motif lies at 185–226; sequence CNVCHKIAIQCQLCENCGIPLHLQCAGIYFRGIANPLCPNCK. Residues 236-270 form a disordered region; it reads LSQVSSQGPSHSQAAPVRGRNQRSRNISTVARTSR. Composition is skewed to polar residues over residues 237–248 and 259–270; these read SQVSSQGPSHSQ and SRNISTVARTSR.

This sequence belongs to the NSE1 family. In terms of assembly, component of the SMC5-SMC6 complex.

The protein resides in the nucleus. Its subcellular location is the chromosome. The protein localises to the telomere. It catalyses the reaction S-ubiquitinyl-[E2 ubiquitin-conjugating enzyme]-L-cysteine + [acceptor protein]-L-lysine = [E2 ubiquitin-conjugating enzyme]-L-cysteine + N(6)-ubiquitinyl-[acceptor protein]-L-lysine.. RING-type zinc finger-containing E3 ubiquitin ligase that assembles with melanoma antigen protein (MAGE) to catalyze the direct transfer of ubiquitin from E2 ubiquitin-conjugating enzyme to a specific substrate. Within MAGE-RING ubiquitin ligase complex, MAGE stimulates and specifies ubiquitin ligase activity likely through recruitment and/or stabilization of the E2 ubiquitin-conjugating enzyme at the E3:substrate complex. Involved in maintenance of genome integrity, DNA damage response and DNA repair. The sequence is that of Non-structural maintenance of chromosomes element 1 homolog (nsmce1) from Xenopus tropicalis (Western clawed frog).